The sequence spans 254 residues: Switch-activating protein 1 (254 aa).

The span at 1–10 (MEAPKMELKS) shows a compositional bias: basic and acidic residues. Positions 1-30 (MEAPKMELKSYKRKNASLSPSSSPAKAQRT) are disordered. Residues 16–25 (ASLSPSSSPA) are compositionally biased toward low complexity. Residues Ser17 and Ser19 each carry the phosphoserine modification. 4 tandem repeats follow at residues 221 to 224 (GVNM), 225 to 228 (GTNM), 229 to 232 (GANM), and 233 to 236 (GANM). The tract at residues 221–236 (GVNMGTNMGANMGANM) is 4 X 4 AA tandem repeats of G-[ATV]-N-M.

As to quaternary structure, homodimer.

The protein resides in the nucleus. Binds to sequences required for mating-type switching. Makes a simultaneous contact with both the alpha and beta domains of the switch-activating site SAS1. Also binds to replication fork barrier 1 (RFB1) located within a 78 base pair sequence near the 3' end of the rRNA coding region. This leads to replication fork blockage. It binds the consensus sequence 5'-TA[AG]GCAGNTN[CT]AACG[AC]G-3'. Functionally, has a role in chromosome organization and integrity where it is involved in chromosome segregation. Has a role in sister chromatid cohesion and condensation. This chain is Switch-activating protein 1 (sap1), found in Schizosaccharomyces pombe (strain 972 / ATCC 24843) (Fission yeast).